A 427-amino-acid polypeptide reads, in one-letter code: UPF0597 protein FN1147 (427 aa).

It belongs to the UPF0597 family.

The chain is UPF0597 protein FN1147 from Fusobacterium nucleatum subsp. nucleatum (strain ATCC 25586 / DSM 15643 / BCRC 10681 / CIP 101130 / JCM 8532 / KCTC 2640 / LMG 13131 / VPI 4355).